A 178-amino-acid polypeptide reads, in one-letter code: Probable chorismate pyruvate-lyase (178 aa).

Substrate contacts are provided by Arg73, Leu111, and Glu163.

Belongs to the UbiC family.

Its subcellular location is the cytoplasm. It catalyses the reaction chorismate = 4-hydroxybenzoate + pyruvate. The protein operates within cofactor biosynthesis; ubiquinone biosynthesis. Its function is as follows. Removes the pyruvyl group from chorismate, with concomitant aromatization of the ring, to provide 4-hydroxybenzoate (4HB) for the ubiquinone pathway. This is Probable chorismate pyruvate-lyase from Pseudomonas aeruginosa (strain ATCC 15692 / DSM 22644 / CIP 104116 / JCM 14847 / LMG 12228 / 1C / PRS 101 / PAO1).